The sequence spans 719 residues: Photosystem I P700 chlorophyll a apoprotein A1 (719 aa).

8 consecutive transmembrane segments (helical) span residues V61–A84, L147–H170, L186–L210, T282–Y300, W337–Y360, L376–V402, A424–H446, and F522–L540. [4Fe-4S] cluster is bound by residues C564 and C573. 2 helical membrane-spanning segments follow: residues H580–W601 and L655–F677. Residue H666 coordinates chlorophyll a'. Chlorophyll a contacts are provided by M674 and Y682. W683 serves as a coordination point for phylloquinone. The chain crosses the membrane as a helical span at residues A715–A719.

The protein belongs to the PsaA/PsaB family. The PsaA/B heterodimer binds the P700 chlorophyll special pair and subsequent electron acceptors. PSI consists of a core antenna complex that captures photons, and an electron transfer chain that converts photonic excitation into a charge separation. The eukaryotic PSI reaction center is composed of at least 11 subunits. P700 is a chlorophyll a/chlorophyll a' dimer, A0 is one or more chlorophyll a, A1 is one or both phylloquinones and FX is a shared 4Fe-4S iron-sulfur center. is required as a cofactor.

It is found in the plastid. Its subcellular location is the chloroplast thylakoid membrane. It catalyses the reaction reduced [plastocyanin] + hnu + oxidized [2Fe-2S]-[ferredoxin] = oxidized [plastocyanin] + reduced [2Fe-2S]-[ferredoxin]. In terms of biological role, psaA and PsaB bind P700, the primary electron donor of photosystem I (PSI), as well as the electron acceptors A0, A1 and FX. PSI is a plastocyanin-ferredoxin oxidoreductase, converting photonic excitation into a charge separation, which transfers an electron from the donor P700 chlorophyll pair to the spectroscopically characterized acceptors A0, A1, FX, FA and FB in turn. Oxidized P700 is reduced on the lumenal side of the thylakoid membrane by plastocyanin. The sequence is that of Photosystem I P700 chlorophyll a apoprotein A1 from Torreya californica (California nutmeg).